The primary structure comprises 447 residues: Cobyrinate a,c-diamide synthase (447 aa).

The region spanning 252-439 is the GATase cobBQ-type domain; sequence KIAVAFDESF…AHQHCIGNPY (188 aa). The active-site Nucleophile is Cys331.

The protein belongs to the CobB/CbiA family. Mg(2+) serves as cofactor.

The catalysed reaction is cob(II)yrinate + 2 L-glutamine + 2 ATP + 2 H2O = cob(II)yrinate a,c diamide + 2 L-glutamate + 2 ADP + 2 phosphate + 2 H(+). It carries out the reaction Ni-sirohydrochlorin + 2 L-glutamine + 2 ATP + 2 H2O = Ni-sirohydrochlorin a,c-diamide + 2 L-glutamate + 2 ADP + 2 phosphate + 2 H(+). The protein operates within cofactor biosynthesis; adenosylcobalamin biosynthesis; cob(II)yrinate a,c-diamide from sirohydrochlorin (anaerobic route): step 10/10. Catalyzes the ATP-dependent amidation of the two carboxylate groups at positions a and c of cobyrinate, using either L-glutamine or ammonia as the nitrogen source. Involved in the biosynthesis of the unique nickel-containing tetrapyrrole coenzyme F430, the prosthetic group of methyl-coenzyme M reductase (MCR), which plays a key role in methanogenesis and anaerobic methane oxidation. Catalyzes the ATP-dependent amidation of the two carboxylate groups at positions a and c of Ni-sirohydrochlorin, using L-glutamine or ammonia as the nitrogen source. The chain is Cobyrinate a,c-diamide synthase from Methanococcus maripaludis (strain C5 / ATCC BAA-1333).